We begin with the raw amino-acid sequence, 197 residues long: Dephospho-CoA kinase (197 aa).

Residues 3 to 197 (IIGLTGGIAS…IEEIWAKRFP (195 aa)) form the DPCK domain. 11–16 (ASGKST) contributes to the ATP binding site.

The protein belongs to the CoaE family.

The protein resides in the cytoplasm. The enzyme catalyses 3'-dephospho-CoA + ATP = ADP + CoA + H(+). The protein operates within cofactor biosynthesis; coenzyme A biosynthesis; CoA from (R)-pantothenate: step 5/5. In terms of biological role, catalyzes the phosphorylation of the 3'-hydroxyl group of dephosphocoenzyme A to form coenzyme A. This Geobacter sulfurreducens (strain ATCC 51573 / DSM 12127 / PCA) protein is Dephospho-CoA kinase.